A 101-amino-acid polypeptide reads, in one-letter code: Large ribosomal subunit protein bL21 (101 aa).

Belongs to the bacterial ribosomal protein bL21 family. As to quaternary structure, part of the 50S ribosomal subunit. Contacts protein L20.

Its function is as follows. This protein binds to 23S rRNA in the presence of protein L20. In Thermus thermophilus (strain ATCC BAA-163 / DSM 7039 / HB27), this protein is Large ribosomal subunit protein bL21.